Reading from the N-terminus, the 617-residue chain is Kelch-like protein diablo (617 aa).

The tract at residues 1-55 (MGDPLLPGSTGLGSGGTAAATGGTGTTGTGLGSGGTSGTERPPSPARLTHTSEKH) is disordered. Residues 10–37 (TGLGSGGTAAATGGTGTTGTGLGSGGTS) show a composition bias toward gly residues. Positions 73–140 (CDVVLNVGGR…CYTAHIIVEE (68 aa)) constitute a BTB domain. In terms of domain architecture, BACK spans 175 to 277 (CLGIRAFADT…SPKFLVGTVG (103 aa)). 6 Kelch repeats span residues 324–370 (VLFA…VLND), 372–418 (LYAV…VLDG), 419–465 (FLYA…VLSG), 467–512 (LYAI…VFNN), 514–559 (IYAV…VVNG), and 560–606 (QLYA…VMRA).

It participates in protein modification; protein ubiquitination. Functionally, probable substrate-specific adapter of an E3 ubiquitin-protein ligase complex which mediates the ubiquitination and subsequent proteasomal degradation of target proteins. May have a role in synapse differentiation and growth. The chain is Kelch-like protein diablo from Drosophila mojavensis (Fruit fly).